The sequence spans 178 residues: Extracellular fatty acid-binding protein (178 aa).

A signal peptide spans 1 to 20 (MRTLALSLALALLCLLHTEA). Blocked amino end (Ala) is present on alanine 21. Threonine 43 provides a ligand contact to enterobactin. Positions 72 and 104 each coordinate 1-tetradecanoyl-sn-glycerol 3-phosphate. An intrachain disulfide couples cysteine 80 to cysteine 173. 3 residues coordinate enterobactin: lysine 104, arginine 123, and arginine 134. Residue 134–136 (RLY) participates in 1-tetradecanoyl-sn-glycerol 3-phosphate binding.

Belongs to the calycin superfamily. Lipocalin family. As to quaternary structure, monomer. Post-translationally, does not seem to be glycosylated. In terms of tissue distribution, expressed in egg white (at protein level). Expressed in the magnum of the oviduct (at protein level). Preferentially synthesized in nonproliferating cells.

It is found in the secreted. Siderocalin-like lipocalin tightly binding a variety of bacterial ferric siderophores, also binds long-chain unsaturated fatty acids such as linoleic acid, oleic acid, arachidonic acid and, with a lower affinity, long chain saturated fatty acids such as steraic acid. May act as an antibacterial factor, through dual ligand specificity, both as a siderophore-sequestrating molecule and a lysophosphatidic acid (LPA) sensor. The polypeptide is Extracellular fatty acid-binding protein (EXFABP) (Gallus gallus (Chicken)).